The following is an 891-amino-acid chain: Alanine--tRNA ligase (891 aa).

The Zn(2+) site is built by His564, His568, Cys678, and His682.

It belongs to the class-II aminoacyl-tRNA synthetase family. The cofactor is Zn(2+).

The protein resides in the cytoplasm. It catalyses the reaction tRNA(Ala) + L-alanine + ATP = L-alanyl-tRNA(Ala) + AMP + diphosphate. In terms of biological role, catalyzes the attachment of alanine to tRNA(Ala) in a two-step reaction: alanine is first activated by ATP to form Ala-AMP and then transferred to the acceptor end of tRNA(Ala). Also edits incorrectly charged Ser-tRNA(Ala) and Gly-tRNA(Ala) via its editing domain. This is Alanine--tRNA ligase from Nitrobacter hamburgensis (strain DSM 10229 / NCIMB 13809 / X14).